The following is a 469-amino-acid chain: Melanopsin (469 aa).

Residues 1–71 (MDSPPGPTAP…VDVPDHAHYI (71 aa)) lie on the Extracellular side of the membrane. N30 carries an N-linked (GlcNAc...) asparagine glycan. The chain crosses the membrane as a helical span at residues 72-92 (LGTVILLVGLTGMLGNLTVIY). At 93–106 (TFCRSRSLRTPANM) the chain is on the cytoplasmic side. The chain crosses the membrane as a helical span at residues 107-127 (LIINLAVSDFLMSFTQAPVFF). The Extracellular portion of the chain corresponds to 128-143 (ASSLYKKWLFGETGCE). C142 and C220 are disulfide-bonded. The chain crosses the membrane as a helical span at residues 144 to 164 (FYAFCGAVLGITSMITLTAIA). The Cytoplasmic segment spans residues 165–187 (LDRYLVITRPLATIGMGSKRRTA). Residues 188–208 (LVLLGIWLYALAWSLPPFFGW) form a helical membrane-spanning segment. Residues 209–237 (SAYVPEGLLTSCSWDYVTFTPQVRAYTML) lie on the Extracellular side of the membrane. Residues 238-258 (LFCFVFFLPLLVIIFCYISIF) form a helical membrane-spanning segment. At 259 to 295 (RAIRETGRACEGWSESPQRRRQWHRLQSEWKMAKVAL) the chain is on the cytoplasmic side. A helical transmembrane segment spans residues 296–316 (IVILLFVLSWAPYSTVALVAF). The Extracellular segment spans residues 317 to 328 (AGYSHILTPYMS). A helical membrane pass occupies residues 329 to 349 (SVPAVIAKASAIHNPIVYAIT). At K336 the chain carries N6-(retinylidene)lysine. Residues 350–469 (HPKYRAAIAQ…SLDLGMQDAP (120 aa)) are Cytoplasmic-facing. The tract at residues 409–469 (GSESEVGWTD…SLDLGMQDAP (61 aa)) is disordered.

The protein belongs to the G-protein coupled receptor 1 family. Opsin subfamily.

The protein resides in the cell membrane. The protein localises to the cell projection. It is found in the axon. It localises to the dendrite. Its subcellular location is the perikaryon. Photoreceptor that binds cis-retinaldehydes. Contributes to pupillar reflex, photoentrainment and other non-image forming responses to light. May be involved in the optokinetic visual tracking response. May be involved in the regulation of retinal hyaloid vessel growth and regression. In Phodopus sungorus (Striped hairy-footed hamster), this protein is Melanopsin (OPN4).